The chain runs to 167 residues: NADH-ubiquinone oxidoreductase chain 4 (167 aa).

3 consecutive transmembrane segments (helical) span residues 2 to 22, 44 to 64, and 86 to 106; these read FIGA…LFCL, LLPL…ALPP, and IILV…MLIM.

The protein belongs to the complex I subunit 4 family.

It localises to the mitochondrion membrane. It carries out the reaction a ubiquinone + NADH + 5 H(+)(in) = a ubiquinol + NAD(+) + 4 H(+)(out). Functionally, core subunit of the mitochondrial membrane respiratory chain NADH dehydrogenase (Complex I) that is believed to belong to the minimal assembly required for catalysis. Complex I functions in the transfer of electrons from NADH to the respiratory chain. The immediate electron acceptor for the enzyme is believed to be ubiquinone. The chain is NADH-ubiquinone oxidoreductase chain 4 (MT-ND4) from Carlito syrichta (Philippine tarsier).